Reading from the N-terminus, the 963-residue chain is Iron-responsive element-binding protein 2 (963 aa).

[4Fe-4S] cluster is bound by residues C512, C578, and C581.

Belongs to the aconitase/IPM isomerase family. As to quaternary structure, interacts with RBCK1 isoform 1 and isoform 2 only in iron-rich conditions. Interacts (when associated with the 4Fe-4S) with FBXL5. Interacts with CIAO1 and CIAO2A. The cofactor is [4Fe-4S] cluster. In terms of processing, ubiquitinated and degraded by the proteasome in presence of high level of iron and oxygen. Ubiquitinated by a SCF complex containing FBXL5. Upon iron and oxygen depletion FBXL5 is degraded, preventing ubiquitination and allowing its RNA-binding activity.

The protein localises to the cytoplasm. Its function is as follows. RNA-binding protein that binds to iron-responsive elements (IRES), which are stem-loop structures found in the 5'-UTR of ferritin, and delta aminolevulinic acid synthase mRNAs, and in the 3'-UTR of transferrin receptor mRNA. Binding to the IRE element in ferritin results in the repression of its mRNA translation. Binding of the protein to the transferrin receptor mRNA inhibits the degradation of this otherwise rapidly degraded mRNA. This Homo sapiens (Human) protein is Iron-responsive element-binding protein 2 (IREB2).